Here is a 292-residue protein sequence, read N- to C-terminus: 4-hydroxy-tetrahydrodipicolinate synthase (292 aa).

Thr-45 provides a ligand contact to pyruvate. The Proton donor/acceptor role is filled by Tyr-133. Lys-161 (schiff-base intermediate with substrate) is an active-site residue. Ile-203 provides a ligand contact to pyruvate.

The protein belongs to the DapA family. Homodimer.

The protein localises to the cytoplasm. The catalysed reaction is L-aspartate 4-semialdehyde + pyruvate = (2S,4S)-4-hydroxy-2,3,4,5-tetrahydrodipicolinate + H2O + H(+). Its pathway is amino-acid biosynthesis; L-lysine biosynthesis via DAP pathway; (S)-tetrahydrodipicolinate from L-aspartate: step 3/4. Catalyzes the condensation of (S)-aspartate-beta-semialdehyde [(S)-ASA] and pyruvate to 4-hydroxy-tetrahydrodipicolinate (HTPA). In Pseudomonas putida (strain W619), this protein is 4-hydroxy-tetrahydrodipicolinate synthase.